The sequence spans 396 residues: Pectinesterase (396 aa).

An N-terminal signal peptide occupies residues 1 to 26 (MQSTTLYLKTAAFLGGCSLFAATALA). Residue Thr-174 coordinates substrate. Asp-232 functions as the Proton donor in the catalytic mechanism. The active-site Nucleophile is the Asp-259. Residues Arg-324 and Trp-326 each contribute to the substrate site.

The protein belongs to the pectinesterase family.

The protein localises to the secreted. It carries out the reaction [(1-&gt;4)-alpha-D-galacturonosyl methyl ester](n) + n H2O = [(1-&gt;4)-alpha-D-galacturonosyl](n) + n methanol + n H(+). It functions in the pathway glycan metabolism; pectin degradation; 2-dehydro-3-deoxy-D-gluconate from pectin: step 1/5. Involved in maceration and soft-rotting of plant tissue. The protein is Pectinesterase (pme) of Ralstonia solanacearum (Pseudomonas solanacearum).